Here is a 336-residue protein sequence, read N- to C-terminus: Dihydroorotate dehydrogenase (quinone) (336 aa).

FMN-binding positions include 62–66 (AGLDK) and Thr86. Substrate is bound at residue Lys66. 111-115 (NRMGF) is a substrate binding site. 2 residues coordinate FMN: Asn139 and Asn172. Asn172 serves as a coordination point for substrate. Ser175 (nucleophile) is an active-site residue. Asn177 provides a ligand contact to substrate. FMN-binding residues include Lys217 and Thr245. Substrate is bound at residue 246–247 (NT). FMN-binding positions include Gly268, Gly297, and 318–319 (YS).

This sequence belongs to the dihydroorotate dehydrogenase family. Type 2 subfamily. As to quaternary structure, monomer. It depends on FMN as a cofactor.

The protein localises to the cell membrane. The enzyme catalyses (S)-dihydroorotate + a quinone = orotate + a quinol. Its pathway is pyrimidine metabolism; UMP biosynthesis via de novo pathway; orotate from (S)-dihydroorotate (quinone route): step 1/1. Functionally, catalyzes the conversion of dihydroorotate to orotate with quinone as electron acceptor. The chain is Dihydroorotate dehydrogenase (quinone) from Aliivibrio fischeri (strain ATCC 700601 / ES114) (Vibrio fischeri).